The primary structure comprises 870 residues: Linoleate 9S-lipoxygenase 2 (870 aa).

In terms of domain architecture, PLAT spans 32–158 (NDFGATVIDG…KYRYNRVFFS (127 aa)). Positions 161–870 (TSLPSKMPAA…ARGIPNSISI (710 aa)) constitute a Lipoxygenase domain. The interval 203–243 (YNDLGEPDSGNPRPVLGGSPDRPYPRRGRTGRKPTKTDPTA) is disordered. The span at 227–236 (PRRGRTGRKP) shows a compositional bias: basic residues. Fe cation contacts are provided by His-525, His-530, His-716, Asn-720, and Ile-870.

This sequence belongs to the lipoxygenase family. Monomer. It depends on Fe cation as a cofactor.

The protein resides in the cytoplasm. The enzyme catalyses (9Z,12Z)-octadecadienoate + O2 = (9S)-hydroperoxy-(10E,12Z)-octadecadienoate. Its pathway is lipid metabolism; oxylipin biosynthesis. Its function is as follows. Plant lipoxygenase may be involved in a number of diverse aspects of plant physiology including growth and development, pest resistance, and senescence or responses to wounding. Catalyzes the hydroperoxidation of lipids containing a cis,cis-1,4-pentadiene structure. In Oryza sativa subsp. japonica (Rice), this protein is Linoleate 9S-lipoxygenase 2 (LOX1.1).